Consider the following 1018-residue polypeptide: Isoleucine--tRNA ligase (1018 aa).

The short motif at 43-53 (PYTTGRIHLGT) is the 'HIGH' region element. The 'KMSKS' region signature appears at 586-590 (KMSKS). Lysine 589 is an ATP binding site.

It belongs to the class-I aminoacyl-tRNA synthetase family. IleS type 2 subfamily. Monomer. Zn(2+) serves as cofactor.

It is found in the cytoplasm. It catalyses the reaction tRNA(Ile) + L-isoleucine + ATP = L-isoleucyl-tRNA(Ile) + AMP + diphosphate. Catalyzes the attachment of isoleucine to tRNA(Ile). As IleRS can inadvertently accommodate and process structurally similar amino acids such as valine, to avoid such errors it has two additional distinct tRNA(Ile)-dependent editing activities. One activity is designated as 'pretransfer' editing and involves the hydrolysis of activated Val-AMP. The other activity is designated 'posttransfer' editing and involves deacylation of mischarged Val-tRNA(Ile). The chain is Isoleucine--tRNA ligase from Archaeoglobus fulgidus (strain ATCC 49558 / DSM 4304 / JCM 9628 / NBRC 100126 / VC-16).